Reading from the N-terminus, the 213-residue chain is Small ribosomal subunit protein eS1 (213 aa).

It belongs to the eukaryotic ribosomal protein eS1 family.

The sequence is that of Small ribosomal subunit protein eS1 from Desulfurococcus amylolyticus (strain DSM 18924 / JCM 16383 / VKM B-2413 / 1221n) (Desulfurococcus kamchatkensis).